The chain runs to 149 residues: Transcriptional repressor NrdR (149 aa).

A zinc finger lies at 3-34 (CPFCNADDTKVIDSRLVADGHQVRRRRECLVC). The ATP-cone domain maps to 49-139 (PRVIKSNGVR…VYRSFEDIRE (91 aa)).

The protein belongs to the NrdR family. It depends on Zn(2+) as a cofactor.

Negatively regulates transcription of bacterial ribonucleotide reductase nrd genes and operons by binding to NrdR-boxes. The protein is Transcriptional repressor NrdR of Tolumonas auensis (strain DSM 9187 / NBRC 110442 / TA 4).